We begin with the raw amino-acid sequence, 255 residues long: Diphthine synthase (255 aa).

Residues L9, D85, V88, 113–114, L164, A207, and H232 contribute to the S-adenosyl-L-methionine site; that span reads SI.

Belongs to the diphthine synthase family. As to quaternary structure, homodimer.

The catalysed reaction is 2-[(3S)-amino-3-carboxypropyl]-L-histidyl-[translation elongation factor 2] + 3 S-adenosyl-L-methionine = diphthine-[translation elongation factor 2] + 3 S-adenosyl-L-homocysteine + 3 H(+). Its pathway is protein modification; peptidyl-diphthamide biosynthesis. Its function is as follows. S-adenosyl-L-methionine-dependent methyltransferase that catalyzes the trimethylation of the amino group of the modified target histidine residue in translation elongation factor 2 (EF-2), to form an intermediate called diphthine. The three successive methylation reactions represent the second step of diphthamide biosynthesis. This Methanococcus maripaludis (strain C6 / ATCC BAA-1332) protein is Diphthine synthase.